The chain runs to 82 residues: Antitoxin MazE2 (82 aa).

In terms of assembly, probably forms a complex with cognate toxin MazF2.

Antitoxin component of a type II toxin-antitoxin (TA) system. Labile antitoxin that binds to cognate MazF2 toxin and counteracts its endoribonuclease activity. This chain is Antitoxin MazE2 (mazE2), found in Mycobacterium bovis (strain ATCC BAA-935 / AF2122/97).